A 409-amino-acid chain; its full sequence is Glycosaminoglycan xylosylkinase (409 aa).

Residues 1–6 (MKLKQR) lie on the Cytoplasmic side of the membrane. A helical; Signal-anchor for type II membrane protein transmembrane segment spans residues 7 to 25 (VVVLCAVLFLLGLAKVFLL). Residues 26-409 (DGGEGSAASR…IEDRMNLPHP (384 aa)) are Lumenal-facing. The ATP site is built by glutamine 107 and lysine 123. Aspartate 142 serves as a coordination point for Mn(2+). Asparagine 193 carries N-linked (GlcNAc...) asparagine glycosylation. 2 disulfide bridges follow: cysteine 196-cysteine 211 and cysteine 201-cysteine 204. 222-225 (TLWL) provides a ligand contact to ATP. 2 disulfides stabilise this stretch: cysteine 257/cysteine 331 and cysteine 332/cysteine 389. Residue aspartate 289 is part of the active site. Positions 294 and 309 each coordinate ATP. Aspartate 309 is a binding site for Mn(2+).

Belongs to the FAM20 family. Mn(2+) serves as cofactor.

It is found in the golgi apparatus membrane. The enzyme catalyses 3-O-(beta-D-galactosyl-(1-&gt;3)-beta-D-galactosyl-(1-&gt;4)-beta-D-xylosyl)-L-seryl-[protein] + ATP = 3-O-(beta-D-galactosyl-(1-&gt;3)-beta-D-galactosyl-(1-&gt;4)-beta-D-2-O-phosphoxylosyl)-L-seryl-[protein] + ADP + H(+). Responsible for the 2-O-phosphorylation of xylose in the glycosaminoglycan-protein linkage region of proteoglycans thereby regulating the amount of mature GAG chains. Sulfated glycosaminoglycans (GAGs), including heparan sulfate and chondroitin sulfate, are synthesized on the so-called common GAG-protein linkage region (GlcUAbeta1-3Galbeta1-3Galbeta1-4Xylbeta1-O-Ser) of core proteins, which is formed by the stepwise addition of monosaccharide residues by the respective specific glycosyltransferases. The sequence is that of Glycosaminoglycan xylosylkinase from Danio rerio (Zebrafish).